The following is a 580-amino-acid chain: Acyl-coenzyme A synthetase ACSM4, mitochondrial (580 aa).

The transit peptide at 1 to 22 (MKIFFRYQTFRFIWLTKPPGRR) directs the protein to the mitochondrion. ATP is bound by residues 229-237 (TSGTTGFPK), 368-373 (EGYGQT), Asp455, Arg470, and Lys566.

This sequence belongs to the ATP-dependent AMP-binding enzyme family. It depends on Mg(2+) as a cofactor. Mn(2+) serves as cofactor.

Its subcellular location is the mitochondrion. It carries out the reaction a medium-chain fatty acid + ATP + CoA = a medium-chain fatty acyl-CoA + AMP + diphosphate. The enzyme catalyses hexanoate + ATP + CoA = hexanoyl-CoA + AMP + diphosphate. It catalyses the reaction octanoate + ATP + CoA = octanoyl-CoA + AMP + diphosphate. The catalysed reaction is decanoate + ATP + CoA = decanoyl-CoA + AMP + diphosphate. It carries out the reaction dodecanoate + ATP + CoA = dodecanoyl-CoA + AMP + diphosphate. Functionally, catalyzes the activation of fatty acids by CoA to produce an acyl-CoA, the first step in fatty acid metabolism. Capable of activating medium-chain fatty acids with a preference for C6-12 fatty acids. The chain is Acyl-coenzyme A synthetase ACSM4, mitochondrial (ACSM4) from Homo sapiens (Human).